We begin with the raw amino-acid sequence, 490 residues long: Protein nucleotidyltransferase YdiU (490 aa).

ATP contacts are provided by Gly-94, Gly-96, Arg-97, Lys-117, Asp-129, Gly-130, Arg-180, and Arg-187. Catalysis depends on Asp-256, which acts as the Proton acceptor. Positions 257 and 266 each coordinate Mg(2+). Asp-266 contacts ATP.

It belongs to the SELO family. Mg(2+) serves as cofactor. The cofactor is Mn(2+).

It catalyses the reaction L-seryl-[protein] + ATP = 3-O-(5'-adenylyl)-L-seryl-[protein] + diphosphate. It carries out the reaction L-threonyl-[protein] + ATP = 3-O-(5'-adenylyl)-L-threonyl-[protein] + diphosphate. The catalysed reaction is L-tyrosyl-[protein] + ATP = O-(5'-adenylyl)-L-tyrosyl-[protein] + diphosphate. The enzyme catalyses L-histidyl-[protein] + UTP = N(tele)-(5'-uridylyl)-L-histidyl-[protein] + diphosphate. It catalyses the reaction L-seryl-[protein] + UTP = O-(5'-uridylyl)-L-seryl-[protein] + diphosphate. It carries out the reaction L-tyrosyl-[protein] + UTP = O-(5'-uridylyl)-L-tyrosyl-[protein] + diphosphate. Its function is as follows. Nucleotidyltransferase involved in the post-translational modification of proteins. It can catalyze the addition of adenosine monophosphate (AMP) or uridine monophosphate (UMP) to a protein, resulting in modifications known as AMPylation and UMPylation. The chain is Protein nucleotidyltransferase YdiU from Clostridium perfringens (strain SM101 / Type A).